The chain runs to 338 residues: Dihydroorotate dehydrogenase (quinone) (338 aa).

FMN is bound by residues A59–K63 and T83. K63 is a substrate binding site. Substrate is bound at residue N108–F112. FMN-binding residues include N136 and N169. Residue N169 coordinates substrate. S172 serves as the catalytic Nucleophile. Substrate is bound at residue N174. 2 residues coordinate FMN: K214 and T242. Substrate is bound at residue N243–T244. FMN is bound by residues G265, G294, and Y315–S316.

The protein belongs to the dihydroorotate dehydrogenase family. Type 2 subfamily. Monomer. FMN serves as cofactor.

The protein resides in the cell membrane. It catalyses the reaction (S)-dihydroorotate + a quinone = orotate + a quinol. It functions in the pathway pyrimidine metabolism; UMP biosynthesis via de novo pathway; orotate from (S)-dihydroorotate (quinone route): step 1/1. Its function is as follows. Catalyzes the conversion of dihydroorotate to orotate with quinone as electron acceptor. In Azoarcus sp. (strain BH72), this protein is Dihydroorotate dehydrogenase (quinone).